Here is a 1222-residue protein sequence, read N- to C-terminus: ATP-dependent helicase/nuclease subunit A (1222 aa).

The UvrD-like helicase ATP-binding domain maps to 27 to 483 (HLQENERCRD…RDYQKKPEQG (457 aa)). 48 to 55 (AIYTSGQN) is a binding site for ATP. Positions 512–798 (ESVGDVLYDE…ADVEVATPKQ (287 aa)) constitute a UvrD-like helicase C-terminal domain.

Belongs to the helicase family. AddA subfamily. In terms of assembly, heterodimer of AddA and AddB/RexB. Requires Mg(2+) as cofactor.

It catalyses the reaction Couples ATP hydrolysis with the unwinding of duplex DNA by translocating in the 3'-5' direction.. The catalysed reaction is ATP + H2O = ADP + phosphate + H(+). Functionally, the heterodimer acts as both an ATP-dependent DNA helicase and an ATP-dependent, dual-direction single-stranded exonuclease. Recognizes the chi site generating a DNA molecule suitable for the initiation of homologous recombination. The AddA nuclease domain is required for chi fragment generation; this subunit has the helicase and 3' -&gt; 5' nuclease activities. This is ATP-dependent helicase/nuclease subunit A from Streptococcus pyogenes serotype M1.